The chain runs to 87 residues: UPF0250 protein YE3006 (87 aa).

It belongs to the UPF0250 family.

The chain is UPF0250 protein YE3006 from Yersinia enterocolitica serotype O:8 / biotype 1B (strain NCTC 13174 / 8081).